Consider the following 215-residue polypeptide: MASGDTKTSVKHAHPCAERLSLQQEEGEAEDYCTPGAFELERLFWKGSPQYTHVNEVWPRLHVGDEATALDRYGLQKAGFTHVLNAAHGRWNVDTGPDYYRDMAIEYHGVEADDVPTFDLSIFFYSAAAFIDSALQDDHSKILVHCAMGRSRSATLVLAYLMIHKNMTLVDAIQQVAKNRCVLPNRGFLKQLRELDKQLVKQRRQAGPGAGELGL.

A Tyrosine-protein phosphatase domain is found at histidine 53–lysine 201. Histidine 145–arginine 152 lines the substrate pocket. The active-site Phosphocysteine intermediate is the cysteine 146.

This sequence belongs to the protein-tyrosine phosphatase family. Non-receptor class dual specificity subfamily. Homodimer. Interacts with PRKAA2.

The protein localises to the cytoplasm. Its subcellular location is the nucleus. It catalyses the reaction O-phospho-L-tyrosyl-[protein] + H2O = L-tyrosyl-[protein] + phosphate. The catalysed reaction is O-phospho-L-seryl-[protein] + H2O = L-seryl-[protein] + phosphate. The enzyme catalyses O-phospho-L-threonyl-[protein] + H2O = L-threonyl-[protein] + phosphate. In terms of biological role, dual specificity phosphatase able to dephosphorylate phosphotyrosine, phosphoserine and phosphothreonine residues within the same substrate, with a preference for phosphotyrosine as a substrate. Involved in the modulation of intracellular signaling cascades. In skeletal muscle regulates systemic glucose homeostasis by activating, AMPK, an energy sensor protein kinase. Affects MAP kinase signaling though modulation of the MAPK1/2 cascade in skeletal muscle promoting muscle cell differentiation, development and atrophy. This Rattus norvegicus (Rat) protein is Dual specificity phosphatase 29 (Dusp29).